The following is a 62-amino-acid chain: Small EDRK-rich factor 1 (62 aa).

2 stretches are compositionally biased toward basic and acidic residues: residues 1 to 30 (MARG…KEDS) and 50 to 62 (AANE…TREK). Positions 1–62 (MARGNQRELA…ERKSMQTREK (62 aa)) are disordered.

This sequence belongs to the SERF family. In terms of assembly, interacts with SNCA; this interaction promotes the aggregation of SNCA.

The protein resides in the cytoplasm. The protein localises to the cytosol. It localises to the nucleus. Positive regulator of amyloid protein aggregation and proteotoxicity. Induces conformational changes in amyloid proteins, such as APP, HTT, and SNCA, driving them into compact formations preceding the formation of aggregates. This chain is Small EDRK-rich factor 1 (SERF1), found in Bos taurus (Bovine).